Reading from the N-terminus, the 242-residue chain is Enolase-phosphatase E1 (242 aa).

It belongs to the HAD-like hydrolase superfamily. MasA/MtnC family. As to quaternary structure, monomer. The cofactor is Mg(2+).

The catalysed reaction is 5-methylsulfanyl-2,3-dioxopentyl phosphate + H2O = 1,2-dihydroxy-5-(methylsulfanyl)pent-1-en-3-one + phosphate. The protein operates within amino-acid biosynthesis; L-methionine biosynthesis via salvage pathway; L-methionine from S-methyl-5-thio-alpha-D-ribose 1-phosphate: step 3/6. It participates in amino-acid biosynthesis; L-methionine biosynthesis via salvage pathway; L-methionine from S-methyl-5-thio-alpha-D-ribose 1-phosphate: step 4/6. Bifunctional enzyme that catalyzes the enolization of 2,3-diketo-5-methylthiopentyl-1-phosphate (DK-MTP-1-P) into the intermediate 2-hydroxy-3-keto-5-methylthiopentenyl-1-phosphate (HK-MTPenyl-1-P), which is then dephosphorylated to form the acireductone 1,2-dihydroxy-3-keto-5-methylthiopentene (DHK-MTPene). In Synechococcus sp. (strain WH7803), this protein is Enolase-phosphatase E1.